The chain runs to 548 residues: Glutamate--tRNA ligase (548 aa).

The 'HIGH' region motif lies at 102–112 (PSPSGPLHIGH).

It belongs to the class-I aminoacyl-tRNA synthetase family. Glutamate--tRNA ligase type 2 subfamily.

The protein resides in the cytoplasm. The enzyme catalyses tRNA(Glu) + L-glutamate + ATP = L-glutamyl-tRNA(Glu) + AMP + diphosphate. Functionally, catalyzes the attachment of glutamate to tRNA(Glu) in a two-step reaction: glutamate is first activated by ATP to form Glu-AMP and then transferred to the acceptor end of tRNA(Glu). This is Glutamate--tRNA ligase from Thermoplasma acidophilum (strain ATCC 25905 / DSM 1728 / JCM 9062 / NBRC 15155 / AMRC-C165).